We begin with the raw amino-acid sequence, 125 residues long: Protein ApaG (125 aa).

The ApaG domain maps to 1–125; the sequence is MINAPRVCVQ…FRLAIPSLIH (125 aa).

This chain is Protein ApaG, found in Pectobacterium atrosepticum (strain SCRI 1043 / ATCC BAA-672) (Erwinia carotovora subsp. atroseptica).